Consider the following 356-residue polypeptide: Formate-nitrite transporter (356 aa).

At 1 to 108 (MPREKPRADE…TKATYPIMKM (108 aa)) the chain is on the cytoplasmic side. Residues 109 to 129 (FSLSVLAGMLLSVGGLLSITI) traverse the membrane as a helical segment. Residues 130–142 (GKGIPSSDIGIQK) lie on the Extracellular side of the membrane. A helical transmembrane segment spans residues 143–163 (IVFGFFNSVGLNLVVLCGGEL). The Cytoplasmic segment spans residues 164–182 (FTSNCAFLIPGFMEGAYSR). A helical membrane pass occupies residues 183–203 (WLFFKTHFVVYFGNLVGSIFV). Over 204–237 (STYFGKLLGSFESPMYLSAVKQIGETKVAMNWGR) the chain is Extracellular. A helical membrane pass occupies residues 238–258 (ALLSGIGCNWLVCCAVYFSAS). The Cytoplasmic segment spans residues 259–265 (AKDLLSK). Residues 266 to 286 (LVVISFLVLTFASLEFENCVG) form a helical membrane-spanning segment. Residues 287 to 310 (NMFLLSLSHMYGGNFTLGQWILNN) lie on the Extracellular side of the membrane. The helical transmembrane segment at 311 to 331 (LIPVSIGNFIGGTFLLGIPLW) threads the bilayer. Residues 332–356 (YVHVSNVYNIPFLDPLYQQSQAKTQ) lie on the Cytoplasmic side of the membrane.

This sequence belongs to the FNT transporter (TC 1.A.16) family. As to quaternary structure, homopentamer.

It localises to the membrane. It catalyses the reaction (S)-lactate(in) + H(+)(in) = (S)-lactate(out) + H(+)(out). The catalysed reaction is formate(in) + H(+)(in) = formate(out) + H(+)(out). It carries out the reaction pyruvate(out) + H(+)(out) = pyruvate(in) + H(+)(in). The enzyme catalyses acetate(out) + H(+)(out) = acetate(in) + H(+)(in). Functionally, monocarboxylate-proton symporter; active in acidic-to-neutral pH range. Transports formate, acetate and L-lactate. The chain is Formate-nitrite transporter from Entamoeba histolytica (strain ATCC 30459 / HM-1:IMSS / ABRM).